The following is a 196-amino-acid chain: Small ribosomal subunit protein uS4c (196 aa).

Positions 16 to 36 (GTLPGLTSKRPKSGSDLKTQL) are disordered. One can recognise an S4 RNA-binding domain in the interval 89–150 (MRLDNILFRL…KQRSKALIQN (62 aa)).

It belongs to the universal ribosomal protein uS4 family. In terms of assembly, part of the 30S ribosomal subunit. Contacts protein S5. The interaction surface between S4 and S5 is involved in control of translational fidelity.

The protein localises to the plastid. It is found in the chloroplast. One of the primary rRNA binding proteins, it binds directly to 16S rRNA where it nucleates assembly of the body of the 30S subunit. Its function is as follows. With S5 and S12 plays an important role in translational accuracy. The chain is Small ribosomal subunit protein uS4c (rps4) from Rhapis humilis (Slender lady palm).